Here is a 450-residue protein sequence, read N- to C-terminus: Probable cysteine desulfurase, mitochondrial (450 aa).

A mitochondrion-targeting transit peptide spans 1–52; it reads MNRSILKFVKNGIISSSSRINNNGFINKNNNNRWFATLPQPNRGIAGEKQPI. Residues 120-121, Asn-200, Gln-228, and 248-250 contribute to the pyridoxal 5'-phosphate site; these read AT and SGH. Lys-251 carries the post-translational modification N6-(pyridoxal phosphate)lysine. A pyridoxal 5'-phosphate-binding site is contributed by Thr-288. The Cysteine persulfide intermediate role is filled by Cys-374. Cys-374 serves as a coordination point for [2Fe-2S] cluster.

The protein belongs to the class-V pyridoxal-phosphate-dependent aminotransferase family. NifS/IscS subfamily. It depends on pyridoxal 5'-phosphate as a cofactor.

The protein localises to the mitochondrion. The protein resides in the nucleus. It catalyses the reaction (sulfur carrier)-H + L-cysteine = (sulfur carrier)-SH + L-alanine. Functionally, catalyzes the removal of elemental sulfur from cysteine to produce alanine. It supplies the inorganic sulfur for iron-sulfur (Fe-S) clusters. The sequence is that of Probable cysteine desulfurase, mitochondrial (nfs1) from Dictyostelium discoideum (Social amoeba).